Consider the following 561-residue polypeptide: Acyl-CoA ligase ppsA (561 aa).

The N-linked (GlcNAc...) asparagine glycan is linked to asparagine 21. Residues 71 to 91 (SILYPALFLAIVGVGAVYMGA) traverse the membrane as a helical segment. 203–214 (MFATSGTSGLPK) is a binding site for AMP. The N-linked (GlcNAc...) asparagine glycan is linked to asparagine 396. The AMP-binding stretch occupies residues 462-540 (ELEAELAQHP…DSIPRNSGGK (79 aa)).

This sequence belongs to the ATP-dependent AMP-binding enzyme family.

The protein resides in the membrane. It carries out the reaction acetate + ATP + CoA = acetyl-CoA + ADP + phosphate. The catalysed reaction is propanoate + ATP + CoA = propanoyl-CoA + AMP + diphosphate. The protein operates within secondary metabolite biosynthesis. Its function is as follows. Acyl-CoA ligase; part of the gene cluster that mediates the biosynthesis of 2,4'-dihydroxy-3'-methoxypropiophenone. The first step of the pathway is the conversion of acetate into acetyl-CoA by the acyl-CoA ligase ppsA. Acetyl-CoA is then used as a starter unit by the polyketide synthase ppsB and condensed with 4 malonyl-CoA unit to produce the pentaketide backbone. During polyketide extension, the polykedite chain is probably reduced and dehydrated by the KR and PT domains, respectively. O-methylation seems to be catalyzed by an unknown methyltransferase rather than by the CMeT domain of ppsB. Two hydroxylations and one further decarboxylation step catalyzed by yet unknown enzymes are then required to yield 4'-hydroxy-3'-methoxypropiophenone. PpsC functions as a carrier protein to transport 4'-hydroxy-3'-methoxypropiophenone to a specific cell compartment in which 4'-hydroxy-3'-methoxypropiophenone is hydroxylated to 2,4'-dihydroxy-3'-methoxypropiophenone by a still to be identified enzyme. This Aspergillus oryzae (strain ATCC 42149 / RIB 40) (Yellow koji mold) protein is Acyl-CoA ligase ppsA.